Reading from the N-terminus, the 414-residue chain is Transposon Ty4-J Gag polyprotein (414 aa).

Positions 39 to 115 (RKVSIKDEQV…IQLLETNENN (77 aa)) form a coiled coil. The tract at residues 378–414 (GAQRQQPLKSSAKRTKVLEQDTKKVEQSVQQQKTGNY) is disordered. Over residues 393–403 (KVLEQDTKKVE) the composition is skewed to basic and acidic residues. The segment covering 404–414 (QSVQQQKTGNY) has biased composition (polar residues).

Its function is as follows. Capsid protein (CA) is the structural component of the virus-like particle (VLP), forming the shell that encapsulates the retrotransposons dimeric RNA genome. This chain is Transposon Ty4-J Gag polyprotein (TY4A-J), found in Saccharomyces cerevisiae (strain ATCC 204508 / S288c) (Baker's yeast).